The primary structure comprises 102 residues: PE family immunomodulator PE15 (102 aa).

The PE domain occupies 3-91 (LRVVPESLAG…SGASYAARDA (89 aa)).

Belongs to the mycobacterial PE family.

The protein resides in the secreted. Its subcellular location is the cell envelope. The protein localises to the cell surface. Its function is as follows. May play a pivotal role in the evasion of host immune response by M.tuberculosis. Mediates production of IL-10 via activation of the p38 and ERK1/2 mitogen-activated protein kinase (MAPK) signaling pathways. This is PE family immunomodulator PE15 (PE15) from Mycobacterium tuberculosis (strain CDC 1551 / Oshkosh).